We begin with the raw amino-acid sequence, 65 residues long: uncharacterized protein (65 aa).

This is an uncharacterized protein from Homo sapiens (Human).